The primary structure comprises 164 residues: UPF0304 protein PC1_2778 (164 aa).

It belongs to the UPF0304 family.

The chain is UPF0304 protein PC1_2778 from Pectobacterium carotovorum subsp. carotovorum (strain PC1).